Here is an 88-residue protein sequence, read N- to C-terminus: Exodeoxyribonuclease 7 small subunit (88 aa).

Belongs to the XseB family. As to quaternary structure, heterooligomer composed of large and small subunits.

It is found in the cytoplasm. It carries out the reaction Exonucleolytic cleavage in either 5'- to 3'- or 3'- to 5'-direction to yield nucleoside 5'-phosphates.. Bidirectionally degrades single-stranded DNA into large acid-insoluble oligonucleotides, which are then degraded further into small acid-soluble oligonucleotides. This is Exodeoxyribonuclease 7 small subunit from Bordetella petrii (strain ATCC BAA-461 / DSM 12804 / CCUG 43448).